The sequence spans 421 residues: Uracil permease (421 aa).

The next 12 helical transmembrane spans lie at 18–38, 41–61, 65–85, 89–109, 115–135, 160–180, 186–206, 232–252, 304–324, 329–349, 371–391, and 393–413; these read IPLSLQHLFAMFGSTVLVPML, INPAICLLMNGIGTLIYIFLC, IPAYLGSSFAFISPVLIVIST, EAALSGFLVVGLVFCLIGLLV, GWIEIVFPPAAMGAIVAVIGL, PKVIAVSLVTLLTAVVGNVMF, IIPILISIIVGYALAAFLGIV, IAIIVPAALVVVAEHIGHLIV, VYSIWIIGGAAVMAIVLSFVG, LIQTIPVPVMGGVSILLFGVI, ILTAVVLIIGISGAAFKWGNF, and MKGMALATVIAILLGLFFNII.

This sequence belongs to the nucleobase:cation symporter-2 (NCS2) (TC 2.A.40) family.

It is found in the cell membrane. With respect to regulation, inhibited by the proton gradient disruptor carbonyl cyanide m-chlorophenylhydrazone (CCCP), but not by the sodium gradient disruptor ouabain. Both xanthine and uric acid act as competitive inhibitors of uracil transport. Functionally, specific for the uptake of uracil. Transport is probably proton-dependent. This chain is Uracil permease, found in Paenibacillus larvae subsp. larvae (strain NRRL B-3650 / LMG 16245).